Consider the following 101-residue polypeptide: NADH-quinone oxidoreductase subunit K (101 aa).

Helical transmembrane passes span 4–24, 30–50, and 61–81; these read LAHY…GIFL, IIIL…FVAF, and IFVF…LAIL.

Belongs to the complex I subunit 4L family. NDH-1 is composed of 14 different subunits. Subunits NuoA, H, J, K, L, M, N constitute the membrane sector of the complex.

It localises to the cell inner membrane. It carries out the reaction a quinone + NADH + 5 H(+)(in) = a quinol + NAD(+) + 4 H(+)(out). Its function is as follows. NDH-1 shuttles electrons from NADH, via FMN and iron-sulfur (Fe-S) centers, to quinones in the respiratory chain. The immediate electron acceptor for the enzyme in this species is believed to be ubiquinone. Couples the redox reaction to proton translocation (for every two electrons transferred, four hydrogen ions are translocated across the cytoplasmic membrane), and thus conserves the redox energy in a proton gradient. In Burkholderia cenocepacia (strain HI2424), this protein is NADH-quinone oxidoreductase subunit K.